A 431-amino-acid chain; its full sequence is tRNA(Ile)-lysidine synthase (431 aa).

19 to 24 (STGIDS) lines the ATP pocket.

The protein belongs to the tRNA(Ile)-lysidine synthase family.

It localises to the cytoplasm. It carries out the reaction cytidine(34) in tRNA(Ile2) + L-lysine + ATP = lysidine(34) in tRNA(Ile2) + AMP + diphosphate + H(+). Its function is as follows. Ligates lysine onto the cytidine present at position 34 of the AUA codon-specific tRNA(Ile) that contains the anticodon CAU, in an ATP-dependent manner. Cytidine is converted to lysidine, thus changing the amino acid specificity of the tRNA from methionine to isoleucine. The sequence is that of tRNA(Ile)-lysidine synthase from Staphylococcus aureus (strain MW2).